Consider the following 110-residue polypeptide: Large ribosomal subunit protein uL22 (110 aa).

It belongs to the universal ribosomal protein uL22 family. Part of the 50S ribosomal subunit.

In terms of biological role, this protein binds specifically to 23S rRNA; its binding is stimulated by other ribosomal proteins, e.g. L4, L17, and L20. It is important during the early stages of 50S assembly. It makes multiple contacts with different domains of the 23S rRNA in the assembled 50S subunit and ribosome. Functionally, the globular domain of the protein is located near the polypeptide exit tunnel on the outside of the subunit, while an extended beta-hairpin is found that lines the wall of the exit tunnel in the center of the 70S ribosome. This is Large ribosomal subunit protein uL22 from Pseudoalteromonas translucida (strain TAC 125).